A 72-amino-acid polypeptide reads, in one-letter code: Conotoxin VnMKLT2-021 (72 aa).

A signal peptide spans 1–22 (MKLTCVLIVAVLFLTACQLTTA). Positions 23–45 (ASYARSEREHPDLGSSDQNSKLT) are excised as a propeptide. The tract at residues 25 to 44 (YARSEREHPDLGSSDQNSKL) is disordered. 3 disulfide bridges follow: Cys-48/Cys-62, Cys-55/Cys-66, and Cys-61/Cys-71.

Belongs to the conotoxin O1 superfamily. In terms of tissue distribution, expressed by the venom duct.

It localises to the secreted. This Conus ventricosus (Mediterranean cone) protein is Conotoxin VnMKLT2-021.